The chain runs to 467 residues: MAVEDNKNSESKNHQEVELHRNDLGLEDSSSPRGVLGMVSDSDNSSSSCSSCSSDDKSSSTSSPFSNTTKTVSSSHHGLQWNKMIESIKKKSMRRFSVIPLLASYELTRKNLRRKQPKLTPSESAFTCEAFFMAKPSWRNFTYEELAVATDYFNPENMIGKGGHAEVYKGVLINGETVAIKKLMSHAKEEEERVSDFLSELGIIAHVNHPNAARLRGFSSDRGLHFVLEYAPYGSLASMLFGSEECLEWKIRYKVALGIADGLSYLHNACPRRIIHRDIKASNILLNHDYEAQISDFGLAKWLPENWPHHVVFPIEGTFGYLAPEYFMHGIVDEKIDVFAFGVLLLEIITSRRAVDTASRQSIVAWAKPFLEKNSMEDIVDPRLGNMFNPTEMQRVMLTASMCVHHIAAMRPDMTRLVQLLRGEDGPAELQQKAGERTMSVNACDLQDHTSSSYLNELRRHRQLLME.

Residues 1-24 are compositionally biased toward basic and acidic residues; sequence MAVEDNKNSESKNHQEVELHRNDL. The interval 1–73 is disordered; it reads MAVEDNKNSE…PFSNTTKTVS (73 aa). Positions 40–71 are enriched in low complexity; that stretch reads SDSDNSSSSCSSCSSDDKSSSTSSPFSNTTKT. Residue Thr-142 is modified to Phosphothreonine. The 278-residue stretch at 153–430 folds into the Protein kinase domain; the sequence is FNPENMIGKG…LRGEDGPAEL (278 aa). ATP-binding positions include 159-167 and Lys-181; that span reads IGKGGHAEV. Residue Asp-278 is the Proton acceptor of the active site. Ser-282 is modified (phosphoserine). Thr-318 carries the phosphothreonine modification. At Tyr-326 the chain carries Phosphotyrosine.

The protein belongs to the protein kinase superfamily. Ser/Thr protein kinase family. Interacts with ARAC5 and ARAC10. Mostly expressed in vasculature, hydathode endothem, leaf mesophyll cells and trichomes.

The protein resides in the cytoplasm. It localises to the endomembrane system. It is found in the nucleus. It catalyses the reaction L-seryl-[protein] + ATP = O-phospho-L-seryl-[protein] + ADP + H(+). It carries out the reaction L-threonyl-[protein] + ATP = O-phospho-L-threonyl-[protein] + ADP + H(+). This chain is Receptor-like cytosolic serine/threonine-protein kinase RBK1 (RBK1), found in Arabidopsis thaliana (Mouse-ear cress).